The sequence spans 317 residues: Peroxidase 64 (317 aa).

The first 22 residues, 1–22, serve as a signal peptide directing secretion; the sequence is MNAHMLNLLVIVIFVVSFDVQA. 4 disulfides stabilise this stretch: Cys-32/Cys-111, Cys-65/Cys-70, Cys-117/Cys-313, and Cys-195/Cys-227. His-63 functions as the Proton acceptor in the catalytic mechanism. 5 residues coordinate Ca(2+): Asp-64, Val-67, Gly-69, Asp-71, and Ser-73. Pro-158 serves as a coordination point for substrate. N-linked (GlcNAc...) asparagine glycosylation occurs at Asn-163. Position 188 (His-188) interacts with heme b. Thr-189 is a Ca(2+) binding site. Ca(2+) is bound by residues Asp-241, Thr-243, and Asp-248.

Belongs to the peroxidase family. Classical plant (class III) peroxidase subfamily. Heme b is required as a cofactor. The cofactor is Ca(2+). As to expression, expressed in the whole plant, but preferentially in roots.

The protein resides in the secreted. It catalyses the reaction 2 a phenolic donor + H2O2 = 2 a phenolic radical donor + 2 H2O. Its function is as follows. Removal of H(2)O(2), oxidation of toxic reductants, biosynthesis and degradation of lignin, suberization, auxin catabolism, response to environmental stresses such as wounding, pathogen attack and oxidative stress. These functions might be dependent on each isozyme/isoform in each plant tissue. This chain is Peroxidase 64 (PER64), found in Arabidopsis thaliana (Mouse-ear cress).